Here is a 329-residue protein sequence, read N- to C-terminus: tRNA(Ile)-lysidine synthase (329 aa).

37–42 (SGGSDS) is a binding site for ATP.

It belongs to the tRNA(Ile)-lysidine synthase family.

The protein localises to the cytoplasm. The catalysed reaction is cytidine(34) in tRNA(Ile2) + L-lysine + ATP = lysidine(34) in tRNA(Ile2) + AMP + diphosphate + H(+). In terms of biological role, ligates lysine onto the cytidine present at position 34 of the AUA codon-specific tRNA(Ile) that contains the anticodon CAU, in an ATP-dependent manner. Cytidine is converted to lysidine, thus changing the amino acid specificity of the tRNA from methionine to isoleucine. In Zymomonas mobilis subsp. mobilis (strain ATCC 31821 / ZM4 / CP4), this protein is tRNA(Ile)-lysidine synthase.